A 109-amino-acid chain; its full sequence is Nucleoid-associated protein Bcer98_0019 (109 aa).

This sequence belongs to the YbaB/EbfC family. In terms of assembly, homodimer.

Its subcellular location is the cytoplasm. It localises to the nucleoid. Its function is as follows. Binds to DNA and alters its conformation. May be involved in regulation of gene expression, nucleoid organization and DNA protection. This is Nucleoid-associated protein Bcer98_0019 from Bacillus cytotoxicus (strain DSM 22905 / CIP 110041 / 391-98 / NVH 391-98).